Reading from the N-terminus, the 122-residue chain is Fluoride-specific ion channel FluC (122 aa).

4 consecutive transmembrane segments (helical) span residues 1–21 (MIGT…SRML), 34–54 (FPYG…LFFS), 60–80 (GVHI…FTTF), and 100–120 (FLNI…GFLI).

It belongs to the fluoride channel Fluc/FEX (TC 1.A.43) family.

The protein resides in the cell inner membrane. The catalysed reaction is fluoride(in) = fluoride(out). Its function is as follows. Fluoride-specific ion channel. Important for reducing fluoride concentration in the cell, thus reducing its toxicity. The protein is Fluoride-specific ion channel FluC of Campylobacter lari (strain RM2100 / D67 / ATCC BAA-1060).